Here is a 492-residue protein sequence, read N- to C-terminus: MKKAILSVSNKSGIVEFAKSLIKLDYELYSTGGTKGALEDASVPVKSVSELTQFPEIMDGRVKTLHPAVHGGILADRDKPEHLEQLSEQHIDLIDMVVVNLYPFQKTVAKPDVTEAEAIENIDIGGPTMLRAAAKNFKHVTTIVHPADYNEVIERIKEDRLDEDFRKELMIKVFAHTNEYDHAIVSFFKGDSEQLRYGENPQQSARFVRTSNSKHTIAGAKQLHGKALSFNNIKDADSALSLVKKFKESAAVAVKHMNPCGVGIGDNIETAFKHAYDADNQSIFGGIIALNRTVTSDLAETLHAIFLEVVIAPRFTDEALDILTKKKNIRLLEIDMTIDNREEEFVSVSGGYLVQDKDNFEVAKEDMKVVTDKAPTDDQWDAMLLGWKVIPSVKSNAVILSNTKQTVGIGAGQMNRVGSAKIALERAIEINDNVALVSDGFFPMDDTVELAAQHGIKAIIQPGGSIKDQDSIDMANKYGIAMVTTGMRHFKH.

One can recognise an MGS-like domain in the interval 1–144; it reads MKKAILSVSN…KNFKHVTTIV (144 aa).

This sequence belongs to the PurH family.

The catalysed reaction is (6R)-10-formyltetrahydrofolate + 5-amino-1-(5-phospho-beta-D-ribosyl)imidazole-4-carboxamide = 5-formamido-1-(5-phospho-D-ribosyl)imidazole-4-carboxamide + (6S)-5,6,7,8-tetrahydrofolate. It carries out the reaction IMP + H2O = 5-formamido-1-(5-phospho-D-ribosyl)imidazole-4-carboxamide. It functions in the pathway purine metabolism; IMP biosynthesis via de novo pathway; 5-formamido-1-(5-phospho-D-ribosyl)imidazole-4-carboxamide from 5-amino-1-(5-phospho-D-ribosyl)imidazole-4-carboxamide (10-formyl THF route): step 1/1. The protein operates within purine metabolism; IMP biosynthesis via de novo pathway; IMP from 5-formamido-1-(5-phospho-D-ribosyl)imidazole-4-carboxamide: step 1/1. The protein is Bifunctional purine biosynthesis protein PurH of Staphylococcus haemolyticus (strain JCSC1435).